The following is a 428-amino-acid chain: Protein terminus (428 aa).

The segment at 325–346 (CRRCRTQFSRRSKLHIHQKLRC) adopts a C3H1-type zinc-finger fold.

The chain is Protein terminus (term) from Drosophila melanogaster (Fruit fly).